The sequence spans 329 residues: Porphobilinogen deaminase (329 aa).

Cysteine 250 is modified (S-(dipyrrolylmethanemethyl)cysteine).

Belongs to the HMBS family. Monomer. Dipyrromethane serves as cofactor.

It catalyses the reaction 4 porphobilinogen + H2O = hydroxymethylbilane + 4 NH4(+). It functions in the pathway porphyrin-containing compound metabolism; protoporphyrin-IX biosynthesis; coproporphyrinogen-III from 5-aminolevulinate: step 2/4. Tetrapolymerization of the monopyrrole PBG into the hydroxymethylbilane pre-uroporphyrinogen in several discrete steps. The polypeptide is Porphobilinogen deaminase (Burkholderia pseudomallei (strain 668)).